We begin with the raw amino-acid sequence, 226 residues long: Enolase-phosphatase E1 (226 aa).

It belongs to the HAD-like hydrolase superfamily. MasA/MtnC family. Monomer. It depends on Mg(2+) as a cofactor.

It carries out the reaction 5-methylsulfanyl-2,3-dioxopentyl phosphate + H2O = 1,2-dihydroxy-5-(methylsulfanyl)pent-1-en-3-one + phosphate. It functions in the pathway amino-acid biosynthesis; L-methionine biosynthesis via salvage pathway; L-methionine from S-methyl-5-thio-alpha-D-ribose 1-phosphate: step 3/6. Its pathway is amino-acid biosynthesis; L-methionine biosynthesis via salvage pathway; L-methionine from S-methyl-5-thio-alpha-D-ribose 1-phosphate: step 4/6. Bifunctional enzyme that catalyzes the enolization of 2,3-diketo-5-methylthiopentyl-1-phosphate (DK-MTP-1-P) into the intermediate 2-hydroxy-3-keto-5-methylthiopentenyl-1-phosphate (HK-MTPenyl-1-P), which is then dephosphorylated to form the acireductone 1,2-dihydroxy-3-keto-5-methylthiopentene (DHK-MTPene). This chain is Enolase-phosphatase E1, found in Shewanella putrefaciens (strain CN-32 / ATCC BAA-453).